Reading from the N-terminus, the 306-residue chain is Protein STPG3 (306 aa).

The segment at 210 to 230 is disordered; that stretch reads CSYTPLLPTSKPSGEKRPSPN.

In Mus musculus (Mouse), this protein is Protein STPG3.